Reading from the N-terminus, the 132-residue chain is MTMTDPIADMLTRLRNASAAKHETVDMPYSKFKKNIAEILKREGYIADFTAKEARVGQTLEVTLKYGPHGERSIQGIKRVSKPGLRRYAKSDALPMPLGGLGIAIISTSSGLLTQKECLDRGIGGEIVAYVW.

This sequence belongs to the universal ribosomal protein uS8 family. As to quaternary structure, part of the 30S ribosomal subunit. Contacts proteins S5 and S12.

Functionally, one of the primary rRNA binding proteins, it binds directly to 16S rRNA central domain where it helps coordinate assembly of the platform of the 30S subunit. The polypeptide is Small ribosomal subunit protein uS8 (Bifidobacterium animalis subsp. lactis (strain AD011)).